Here is a 457-residue protein sequence, read N- to C-terminus: Nuclear hormone receptor family member nhr-20 (457 aa).

The nuclear receptor DNA-binding region spans 16–92 (TSKCLVCEHP…AGMRRECVQK (77 aa)). 2 NR C4-type zinc fingers span residues 19–40 (CLVCEHPDGGSAHFGSTSCLAC) and 56–80 (CKKDKNCVIFHELRMICRACRFDKC). The interval 125 to 182 (GDQTDDNSPLSIEKKSPPGLLPNDSPMMADFKFDPSDIPSTSGGSTQRLERSPSPKLA) is disordered. Residues 162-171 (IPSTSGGSTQ) show a composition bias toward polar residues. One can recognise an NR LBD domain in the interval 201–457 (QLKNSMDRRR…DALSKSLLTL (257 aa)).

This sequence belongs to the nuclear hormone receptor family.

The protein localises to the nucleus. In terms of biological role, orphan nuclear receptor. This chain is Nuclear hormone receptor family member nhr-20 (nhr-20), found in Caenorhabditis elegans.